A 100-amino-acid chain; its full sequence is Large ribosomal subunit protein uL23 (100 aa).

This sequence belongs to the universal ribosomal protein uL23 family. Part of the 50S ribosomal subunit. Contacts protein L29, and trigger factor when it is bound to the ribosome.

Its function is as follows. One of the early assembly proteins it binds 23S rRNA. One of the proteins that surrounds the polypeptide exit tunnel on the outside of the ribosome. Forms the main docking site for trigger factor binding to the ribosome. This chain is Large ribosomal subunit protein uL23, found in Photobacterium profundum (strain SS9).